Here is a 335-residue protein sequence, read N- to C-terminus: Phosphate acyltransferase (335 aa).

This sequence belongs to the PlsX family. Homodimer. Probably interacts with PlsY.

The protein resides in the cytoplasm. It catalyses the reaction a fatty acyl-[ACP] + phosphate = an acyl phosphate + holo-[ACP]. The protein operates within lipid metabolism; phospholipid metabolism. Functionally, catalyzes the reversible formation of acyl-phosphate (acyl-PO(4)) from acyl-[acyl-carrier-protein] (acyl-ACP). This enzyme utilizes acyl-ACP as fatty acyl donor, but not acyl-CoA. This is Phosphate acyltransferase from Desulforudis audaxviator (strain MP104C).